The sequence spans 283 residues: Elongation factor Ts (283 aa).

The involved in Mg(2+) ion dislocation from EF-Tu stretch occupies residues 80–83; sequence TDFV.

The protein belongs to the EF-Ts family.

Its subcellular location is the cytoplasm. Its function is as follows. Associates with the EF-Tu.GDP complex and induces the exchange of GDP to GTP. It remains bound to the aminoacyl-tRNA.EF-Tu.GTP complex up to the GTP hydrolysis stage on the ribosome. In Actinobacillus succinogenes (strain ATCC 55618 / DSM 22257 / CCUG 43843 / 130Z), this protein is Elongation factor Ts.